A 278-amino-acid polypeptide reads, in one-letter code: Probable endonuclease 4 (278 aa).

Residues histidine 69, histidine 109, glutamate 145, aspartate 179, histidine 182, histidine 214, aspartate 227, histidine 229, and glutamate 259 each coordinate Zn(2+).

The protein belongs to the AP endonuclease 2 family. Zn(2+) is required as a cofactor.

It catalyses the reaction Endonucleolytic cleavage to 5'-phosphooligonucleotide end-products.. Functionally, endonuclease IV plays a role in DNA repair. It cleaves phosphodiester bonds at apurinic or apyrimidinic (AP) sites, generating a 3'-hydroxyl group and a 5'-terminal sugar phosphate. The chain is Probable endonuclease 4 from Bacteroides fragilis (strain ATCC 25285 / DSM 2151 / CCUG 4856 / JCM 11019 / LMG 10263 / NCTC 9343 / Onslow / VPI 2553 / EN-2).